Here is a 414-residue protein sequence, read N- to C-terminus: Serine hydroxymethyltransferase (414 aa).

(6S)-5,6,7,8-tetrahydrofolate is bound by residues Leu-117 and 121 to 123 (GHL). Lys-226 bears the N6-(pyridoxal phosphate)lysine mark.

The protein belongs to the SHMT family. As to quaternary structure, homodimer. The cofactor is pyridoxal 5'-phosphate.

The protein localises to the cytoplasm. It carries out the reaction (6R)-5,10-methylene-5,6,7,8-tetrahydrofolate + glycine + H2O = (6S)-5,6,7,8-tetrahydrofolate + L-serine. It participates in one-carbon metabolism; tetrahydrofolate interconversion. It functions in the pathway amino-acid biosynthesis; glycine biosynthesis; glycine from L-serine: step 1/1. Catalyzes the reversible interconversion of serine and glycine with tetrahydrofolate (THF) serving as the one-carbon carrier. This reaction serves as the major source of one-carbon groups required for the biosynthesis of purines, thymidylate, methionine, and other important biomolecules. Also exhibits THF-independent aldolase activity toward beta-hydroxyamino acids, producing glycine and aldehydes, via a retro-aldol mechanism. The chain is Serine hydroxymethyltransferase from Dictyoglomus turgidum (strain DSM 6724 / Z-1310).